Here is a 486-residue protein sequence, read N- to C-terminus: Mitogen-activated protein kinase 17 (486 aa).

Residues 16–307 form the Protein kinase domain; that stretch reads YQIQEVVGKG…AEEALADPYF (292 aa). Residues 22 to 30 and K45 each bind ATP; that span reads VGKGSYGVV. D142 functions as the Proton acceptor in the catalytic mechanism. T178 is subject to Phosphothreonine. The TXY signature appears at 178–180; sequence TDY. A Phosphotyrosine modification is found at Y180. Position 183 is a phosphothreonine (T183). The segment at 386-455 is disordered; sequence EEHNDDEEEH…LSSQKASQVD (70 aa). Positions 422-433 are enriched in low complexity; it reads SVHAQSSSASVV. A compositionally biased stretch (polar residues) spans 440–452; that stretch reads PNTATGLSSQKAS.

It belongs to the protein kinase superfamily. CMGC Ser/Thr protein kinase family. MAP kinase subfamily. In terms of processing, dually phosphorylated on Thr-178 and Tyr-180, which activates the enzyme.

The enzyme catalyses L-seryl-[protein] + ATP = O-phospho-L-seryl-[protein] + ADP + H(+). It carries out the reaction L-threonyl-[protein] + ATP = O-phospho-L-threonyl-[protein] + ADP + H(+). With respect to regulation, activated by threonine and tyrosine phosphorylation. The polypeptide is Mitogen-activated protein kinase 17 (MPK17) (Arabidopsis thaliana (Mouse-ear cress)).